The primary structure comprises 70 residues: Probable tautomerase RSp0893 (70 aa).

Catalysis depends on proline 2, which acts as the Proton acceptor; via imino nitrogen.

It belongs to the 4-oxalocrotonate tautomerase family.

This Ralstonia nicotianae (strain ATCC BAA-1114 / GMI1000) (Ralstonia solanacearum) protein is Probable tautomerase RSp0893.